Here is a 560-residue protein sequence, read N- to C-terminus: Triacylglyceride transporter MSMEG_3069/MSMEI_2992 (560 aa).

14 consecutive transmembrane segments (helical) span residues 16 to 36, 48 to 68, 78 to 98, 108 to 128, 143 to 163, 168 to 188, 200 to 220, 229 to 249, 269 to 289, 307 to 327, 336 to 356, 368 to 388, 411 to 431, and 477 to 497; these read LAVLLGALDTYVVITIIVDIM, QVTPIITGYLLGYIAAMPLLG, MLIQVGLAGFAVGSVVTALSS, IIQGSASGALLPVTLALAADL, AAQELGAVLGPMYGIALVWLF, AVFWVNVPLAVIAMVMIHFSL, VDVIGGVLLAIALGLTVVGLY, VLPSWGLPVLAGALVAAVAFF, PFLAALAASLCAGAALMVTLV, AFLLLRFLIALPIGALIGGWL, VVLIGLLIAAGGFVLISHWSV, FTLPVLDTDLAIVGLGLGLVI, VVVARMIGMLIGIAALGAWGF, and IFLSAAVVCVIGALLGLLISG. The segment at 362–371 is beta-hairpin; the sequence is RHNLGLFTLP. The tract at residues 519–560 is disordered; sequence IDPYDAGDADDAPTEMLDLPTQVLSAPPSDPGDERPGRHRAP.

It belongs to the major facilitator superfamily. P55 (TC 2.A.1.3.34) family.

Its subcellular location is the cell inner membrane. Its activity is regulated as follows. Resistance to ethidium bromide is inhibited by reserpine. Functionally, in association with lipoprotein LprG transports triacyglycerides (TAG) across the inner cell membrane into the periplasm; TAG probably regulates lipid metabolism and growth regulation and plays a structural role in the outer membrane. TAG (and maybe other lipids) enters the central cavity of the P55 transporter from within the cell inner membrane via clefts on the cytoplasmic face of P55 between TM5-TM8 and TM2-TM11. From there the lipid is probably transferred to the hydrophobic cavity of LprG. Confers resistance to ethidium bromide, possibly acting as an efflux pump, requires LprG lipoprotein for normal function. Export of ethidium bromide can be complemented by the equivalent operon from M.tuberculosis (lprG-Rv1410c). Involved in drug susceptibilty, its expression alone partially complements the antibiotic susceptibilty of a double lprG-mfs deletion. Probably does not function as a bona fide drug efflux pump, but instead plays a role in outer membrane biogenesis. Probably required with LprG for normal surface localization of lipoarabinomannan (LAM). In Mycolicibacterium smegmatis (strain ATCC 700084 / mc(2)155) (Mycobacterium smegmatis), this protein is Triacylglyceride transporter MSMEG_3069/MSMEI_2992.